The chain runs to 118 residues: Small ribosomal subunit protein uS13 (118 aa).

A disordered region spans residues 94-118 (GLPVRGQRTQTNARTRKGPRRLARK). The span at 107–118 (RTRKGPRRLARK) shows a compositional bias: basic residues.

The protein belongs to the universal ribosomal protein uS13 family. Part of the 30S ribosomal subunit. Forms a loose heterodimer with protein S19. Forms two bridges to the 50S subunit in the 70S ribosome.

Located at the top of the head of the 30S subunit, it contacts several helices of the 16S rRNA. In the 70S ribosome it contacts the 23S rRNA (bridge B1a) and protein L5 of the 50S subunit (bridge B1b), connecting the 2 subunits; these bridges are implicated in subunit movement. Contacts the tRNAs in the A and P-sites. The polypeptide is Small ribosomal subunit protein uS13 (Nitrosococcus oceani (strain ATCC 19707 / BCRC 17464 / JCM 30415 / NCIMB 11848 / C-107)).